The primary structure comprises 137 residues: Basic phospholipase A2 beta-bungarotoxin A5 chain (137 aa).

The signal sequence occupies residues 1–9 (AVCVSLLGA). Positions 10–17 (ANIPPQHL) are excised as a propeptide. Disulfide bonds link Cys44-Cys136, Cys46-Cys62, Cys61-Cys117, Cys68-Cys110, Cys78-Cys103, and Cys96-Cys108. Ca(2+)-binding residues include Tyr45, Gly47, and Gly49. The active site involves His65. Asp66 contacts Ca(2+). The active site involves Asp111.

The protein belongs to the phospholipase A2 family. Group I subfamily. D49 sub-subfamily. In terms of assembly, heterodimer; disulfide-linked. The A chains have phospholipase A2 activity and the B chains show homology with the basic protease inhibitors. It depends on Ca(2+) as a cofactor. In terms of tissue distribution, expressed by the venom gland.

The protein localises to the secreted. The enzyme catalyses a 1,2-diacyl-sn-glycero-3-phosphocholine + H2O = a 1-acyl-sn-glycero-3-phosphocholine + a fatty acid + H(+). Functionally, snake venom phospholipase A2 (PLA2) that inhibits neuromuscular transmission by blocking acetylcholine release from the nerve termini. PLA2 catalyzes the calcium-dependent hydrolysis of the 2-acyl groups in 3-sn-phosphoglycerides. This Bungarus multicinctus (Many-banded krait) protein is Basic phospholipase A2 beta-bungarotoxin A5 chain.